Here is a 521-residue protein sequence, read N- to C-terminus: Maturase K (521 aa).

It belongs to the intron maturase 2 family. MatK subfamily.

The protein localises to the plastid. It localises to the chloroplast. Functionally, usually encoded in the trnK tRNA gene intron. Probably assists in splicing its own and other chloroplast group II introns. The sequence is that of Maturase K from Kniphofia uvaria (Red-hot poker).